Consider the following 527-residue polypeptide: GMP synthase [glutamine-hydrolyzing] (527 aa).

The region spanning 4–202 (KILILDFGSQ…VLKICGAQPD (199 aa)) is the Glutamine amidotransferase type-1 domain. The active-site Nucleophile is cysteine 81. Residues histidine 176 and glutamate 178 contribute to the active site. The GMPS ATP-PPase domain occupies 203–395 (WEMGHYIDEA…LGLPPAMVYR (193 aa)). An ATP-binding site is contributed by 230-236 (SGGVDSS).

In terms of assembly, homodimer.

The catalysed reaction is XMP + L-glutamine + ATP + H2O = GMP + L-glutamate + AMP + diphosphate + 2 H(+). It participates in purine metabolism; GMP biosynthesis; GMP from XMP (L-Gln route): step 1/1. Functionally, catalyzes the synthesis of GMP from XMP. The polypeptide is GMP synthase [glutamine-hydrolyzing] (Paraburkholderia xenovorans (strain LB400)).